The primary structure comprises 623 residues: Glucokinase regulatory protein (623 aa).

SIS domains are found at residues 90–286 and 320–476; these read VQEV…QGVV and VGIS…VQKF. Beta-D-fructose 1-phosphate is bound by residues 109-110, Glu153, and 179-181; these read TS and SVG. Beta-D-fructose 6-phosphate is bound at residue 109 to 110; it reads TS. Residue 179 to 181 participates in beta-D-fructose 6-phosphate binding; it reads SVG. Positions 199–200 are important for interaction with GCK; that stretch reads AV. Glu348 serves as a coordination point for beta-D-fructose 1-phosphate. The interval 463-465 is essential for interaction with GCK; the sequence is LLF.

This sequence belongs to the GCKR family. Interacts (fructose 6-phosphate bound form) with GCK.

Its subcellular location is the cytoplasm. The protein localises to the nucleus. It localises to the mitochondrion. In terms of biological role, regulates glucokinase (GCK) by forming an inactive complex with this enzyme. Acts by promoting GCK recruitment to the nucleus, possibly to provide a reserve of GCK that can be quickly released in the cytoplasm after a meal. The affinity of GCKR for GCK is modulated by fructose metabolites: GCKR with bound fructose 6-phosphate has increased affinity for GCK, while GCKR with bound fructose 1-phosphate has strongly decreased affinity for GCK and does not inhibit GCK activity. The chain is Glucokinase regulatory protein from Mus musculus (Mouse).